Reading from the N-terminus, the 396-residue chain is 1-deoxy-D-xylulose 5-phosphate reductoisomerase (396 aa).

The NADPH site is built by threonine 10, glycine 11, serine 12, isoleucine 13, and asparagine 123. Lysine 124 contributes to the 1-deoxy-D-xylulose 5-phosphate binding site. Residue glutamate 125 participates in NADPH binding. Aspartate 149 is a Mn(2+) binding site. Residues serine 150, glutamate 151, serine 185, and histidine 208 each contribute to the 1-deoxy-D-xylulose 5-phosphate site. Position 151 (glutamate 151) interacts with Mn(2+). NADPH is bound at residue glycine 214. Residues serine 221, asparagine 226, lysine 227, and glutamate 230 each contribute to the 1-deoxy-D-xylulose 5-phosphate site. Glutamate 230 contributes to the Mn(2+) binding site.

It belongs to the DXR family. It depends on Mg(2+) as a cofactor. The cofactor is Mn(2+).

The enzyme catalyses 2-C-methyl-D-erythritol 4-phosphate + NADP(+) = 1-deoxy-D-xylulose 5-phosphate + NADPH + H(+). It participates in isoprenoid biosynthesis; isopentenyl diphosphate biosynthesis via DXP pathway; isopentenyl diphosphate from 1-deoxy-D-xylulose 5-phosphate: step 1/6. Catalyzes the NADPH-dependent rearrangement and reduction of 1-deoxy-D-xylulose-5-phosphate (DXP) to 2-C-methyl-D-erythritol 4-phosphate (MEP). This chain is 1-deoxy-D-xylulose 5-phosphate reductoisomerase, found in Shewanella baltica (strain OS155 / ATCC BAA-1091).